The chain runs to 151 residues: Cytochrome c oxidase subunit 5B, mitochondrial (151 aa).

Residues 1–17 constitute a mitochondrion transit peptide; it reads MLRTSLTKGARLTGTRF. Topologically, residues 18–85 are mitochondrial matrix; that stretch reads VQTKALSKAT…EWGPRRPVHG (68 aa). Residues 86-108 traverse the membrane as a helical segment; the sequence is KGDVAFITKGVFLGLGISFGLFG. Residues 109-151 are Mitochondrial intermembrane-facing; that stretch reads LVRLLANPETPKTMNREWQLKSDEYLKSKNANPWGGYSQVQSK.

The protein belongs to the cytochrome c oxidase IV family. Component of the cytochrome c oxidase (complex IV, CIV), a multisubunit enzyme composed of 12 subunits. The complex is composed of a catalytic core of 3 subunits COX1, COX2 and COX3, encoded in the mitochondrial DNA, and 9 supernumerary subunits COX4, COX5A (or COX5B), COX6, COX7, COX8, COX9, COX12, COX13 and COX26, which are encoded in the nuclear genome. COX5A is the predominant subunit V during aerobic/normoxic growth, it gets replaced by COX5B under anaerobic/hypoxic conditions. The complex exists as a monomer or a dimer and forms supercomplexes (SCs) in the inner mitochondrial membrane with a dimer of ubiquinol-cytochrome c oxidoreductase (cytochrome b-c1 complex, complex III, CIII), resulting in 2 different assemblies (supercomplexes III(2)IV and III(2)IV(2)).

It is found in the mitochondrion inner membrane. It participates in energy metabolism; oxidative phosphorylation. Functionally, component of the cytochrome c oxidase, the last enzyme in the mitochondrial electron transport chain which drives oxidative phosphorylation. The respiratory chain contains 3 multisubunit complexes succinate dehydrogenase (complex II, CII), ubiquinol-cytochrome c oxidoreductase (cytochrome b-c1 complex, complex III, CIII) and cytochrome c oxidase (complex IV, CIV), that cooperate to transfer electrons derived from NADH and succinate to molecular oxygen, creating an electrochemical gradient over the inner membrane that drives transmembrane transport and the ATP synthase. Cytochrome c oxidase is the component of the respiratory chain that catalyzes the reduction of oxygen to water. Electrons originating from reduced cytochrome c in the intermembrane space (IMS) are transferred via the dinuclear copper A center (CU(A)) of COX2 and heme A of COX1 to the active site in COX1, a binuclear center (BNC) formed by heme A3 and copper B (CU(B)). The BNC reduces molecular oxygen to 2 water molecules using 4 electrons from cytochrome c in the IMS and 4 protons from the mitochondrial matrix. This is Cytochrome c oxidase subunit 5B, mitochondrial (COX5B) from Saccharomyces cerevisiae (strain ATCC 204508 / S288c) (Baker's yeast).